Here is a 2877-residue protein sequence, read N- to C-terminus: Desmoplakin (2877 aa).

Residues 1-20 form a disordered region; sequence MSCNGGSHPRINTLGRMTRA. Positions 1-591 are interaction with PKP1, JUP, PKP2; the sequence is MSCNGGSHPR…DYMKTIEDLE (591 aa). The interval 1-1063 is globular 1; sequence MSCNGGSHPR…ANSENCNKNK (1063 aa). Residues serine 22 and serine 62 each carry the phosphoserine modification. Tyrosine 65 is modified (phosphotyrosine). Threonine 70 carries the phosphothreonine modification. 3 positions are modified to phosphoserine: serine 174, serine 175, and serine 183. Spectrin repeat units follow at residues 185–278 and 279–382; these read SGWD…HLRQ and LQNI…LKEN. Residues 383–453 form a Spectrin 3a repeat; sequence AAYFQFFEEA…NLVNKSKKIV (71 aa). One can recognise an SH3 domain in the interval 465–522; sequence NKPIILRALCDYKQDQKIVHKGDECILKDNNERSKWYVTGPGGVDMLVPSVGLIIPPP. One copy of the Spectrin 3b repeat lies at 523-552; that stretch reads NPLAVDLSCKIEQYYEAILALWNQLYINMK. Spectrin repeat units lie at residues 553–634, 661–776, and 777–890; these read SLVS…IQLP, VIET…SLCS, and VRAL…DLEK. Coiled-coil stretches lie at residues 1034–1280, 1313–1354, 1395–1443, and 1473–1926; these read LKLK…AEEN, NARH…YENE, TSGY…QKAS, and KQSL…KLED. Positions 1064-1952 are central fibrous rod domain; it reads FLDQNLQKYQ…QKEIDKLRQR (889 aa). Residues serine 1665, serine 1715, and serine 2031 each carry the phosphoserine modification. The interval 1953–2877 is globular 2; sequence PYGSHRETQT…YSFSSSSIGY (925 aa). The segment at 1967-2215 is 4.5 X 38 AA tandem repeats (Domain A); sequence TVDSSKLVFD…LLLSVQKRSM (249 aa). Plectin repeat units lie at residues 2016–2052, 2053–2090, 2091–2128, 2129–2166, 2170–2204, 2205–2240, 2258–2295, 2296–2333, 2334–2371, 2372–2409, 2413–2447, 2463–2500, 2514–2551, 2617–2654, 2655–2692, 2731–2768, and 2769–2806; these read QPFLRGAGAIAGASASPKEKYSLVEAKRKKFITPEST, VMLLEAQAATGGIIDPHRNEKLTVDNAIARDLIDFDDR, QQIYTAEKAITGFDDPFSGKTVSVSEAIKKNLIDRETG, MRLLEAQLASGGVVDPVNSVFLPKDVALARGLIDRDLY, NDPRDSQKNFVDPITKKKVSYMQLRERCRIEPHTG, LLLLSVQKRSMSFQGIRQPVTVTELVDSGILRPSTV, KDFLQGSSCIAGIYNETTKQKLGIYEAMKIGLVRPGTA, LELLEAQAATGFIVDPVSNLRLPVEEAYKRGLVGIEFK, EKLLSAERAVTGYNDPETGNIISLFQAMNKELIEKGHG, IRLLEAQIATGGIIDPKESHRLPVDMAYKRGYFNEELS, SDPSDDTKGFFDPNTEENLTYLQLKERCIKDEETG, SQKNTLRKRRVVIVDPETNKEMSVQEAYKKGLIDYETF, TITGSDGSTRVVLVDRKTGSQYDIQDAIDKGLVDRKFF, SDPLEESSPIAAIFDTENLEKISITEGIERGIVDSITG, QRLLEAQACTGGIIHPTTGQKLSLQDAVSQGLIDQDMA, QRFLEFQFLTGGLVDPEVHGRISTEEAIRKGFIDGRAA, and QRLQDISSYAKILTCPKTKLKISYKDAMNRSMVEDITG. 3 positions are modified to phosphoserine: serine 2214, serine 2216, and serine 2232. Positions 2251-2453 are 4.5 X 38 AA tandem repeats (Domain B); it reads DEVGERIKDF…EETGLCLLPL (203 aa). Residues 2603–2628 form an LRR 15 repeat; sequence ISSVRNLTIRSSSLSDPLEESSPIAA. Residues 2616–2828 are 4.5 X 38 AA tandem repeats (Domain C); that stretch reads LSDPLEESSP…GLPSPYNMSA (213 aa). Residues serine 2817 and serine 2822 each carry the phosphoserine modification. A disordered region spans residues 2817-2877; that stretch reads SKGLPSPYNM…YSFSSSSIGY (61 aa). Tyrosine 2824 carries the phosphotyrosine modification. A phosphoserine mark is found at serine 2827 and serine 2831. The interval 2830 to 2853 is 6 X 4 AA tandem repeats of G-S-R-[SR]; that stretch reads GSRSGSRSGSRSGSRSGSRSGSRR. Residues 2830 to 2853 show a composition bias toward low complexity; the sequence is GSRSGSRSGSRSGSRSGSRSGSRR. Omega-N-methylarginine occurs at positions 2832 and 2853. Serine 2855 is modified (phosphoserine). Threonine 2859 bears the Phosphothreonine mark. Positions 2862–2877 are enriched in low complexity; that stretch reads SSYSYSYSFSSSSIGY. Phosphoserine is present on serine 2874.

It belongs to the plakin or cytolinker family. In terms of assembly, homodimer. Interacts with COL17A1 (via cytoplasmic region). Interacts with DSC2. Interacts with PKP1. Interacts with PKP2. Interacts weakly with TMEM65. In terms of processing, phosphorylation at Ser-2855 increases association with intermediate filament cytokeratin, potentially facilitating interaction between desmosome junctions and intermediate filament architecture. Expressed in cardiomyocytes (at protein level).

It is found in the cell junction. It localises to the desmosome. The protein resides in the cell membrane. Its subcellular location is the cytoplasm. Functionally, major high molecular weight protein of desmosomes. Regulates profibrotic gene expression in cardiomyocytes via activation of the MAPK14/p38 MAPK signaling cascade and increase in TGFB1 protein abundance. The chain is Desmoplakin from Rattus norvegicus (Rat).